The following is a 143-amino-acid chain: Transcription antitermination protein NusB (143 aa).

The protein belongs to the NusB family.

Functionally, involved in transcription antitermination. Required for transcription of ribosomal RNA (rRNA) genes. Binds specifically to the boxA antiterminator sequence of the ribosomal RNA (rrn) operons. The polypeptide is Transcription antitermination protein NusB (Streptomyces griseus subsp. griseus (strain JCM 4626 / CBS 651.72 / NBRC 13350 / KCC S-0626 / ISP 5235)).